The chain runs to 261 residues: Hydroxyethylthiazole kinase (261 aa).

Position 45 (methionine 45) interacts with substrate. ATP is bound by residues arginine 121 and serine 167. A substrate-binding site is contributed by glycine 194.

Belongs to the Thz kinase family. Mg(2+) is required as a cofactor.

The catalysed reaction is 5-(2-hydroxyethyl)-4-methylthiazole + ATP = 4-methyl-5-(2-phosphooxyethyl)-thiazole + ADP + H(+). It functions in the pathway cofactor biosynthesis; thiamine diphosphate biosynthesis; 4-methyl-5-(2-phosphoethyl)-thiazole from 5-(2-hydroxyethyl)-4-methylthiazole: step 1/1. Its function is as follows. Catalyzes the phosphorylation of the hydroxyl group of 4-methyl-5-beta-hydroxyethylthiazole (THZ). The sequence is that of Hydroxyethylthiazole kinase from Vibrio atlanticus (strain LGP32) (Vibrio splendidus (strain Mel32)).